A 418-amino-acid polypeptide reads, in one-letter code: Serine--tRNA ligase (418 aa).

Thr231–Glu233 serves as a coordination point for L-serine. Arg262–Glu264 lines the ATP pocket. Glu285 is an L-serine binding site. Glu349–Ser352 contributes to the ATP binding site. Ser384 serves as a coordination point for L-serine.

This sequence belongs to the class-II aminoacyl-tRNA synthetase family. Type-1 seryl-tRNA synthetase subfamily. In terms of assembly, homodimer. The tRNA molecule binds across the dimer.

It localises to the cytoplasm. The enzyme catalyses tRNA(Ser) + L-serine + ATP = L-seryl-tRNA(Ser) + AMP + diphosphate + H(+). It catalyses the reaction tRNA(Sec) + L-serine + ATP = L-seryl-tRNA(Sec) + AMP + diphosphate + H(+). It functions in the pathway aminoacyl-tRNA biosynthesis; selenocysteinyl-tRNA(Sec) biosynthesis; L-seryl-tRNA(Sec) from L-serine and tRNA(Sec): step 1/1. In terms of biological role, catalyzes the attachment of serine to tRNA(Ser). Is also able to aminoacylate tRNA(Sec) with serine, to form the misacylated tRNA L-seryl-tRNA(Sec), which will be further converted into selenocysteinyl-tRNA(Sec). The chain is Serine--tRNA ligase from Coprothermobacter proteolyticus (strain ATCC 35245 / DSM 5265 / OCM 4 / BT).